The following is a 483-amino-acid chain: GTPase Obg (483 aa).

The 158-residue stretch at 2–159 (SRFIDRVVLH…RDLVLELKSV (158 aa)) folds into the Obg domain. The 181-residue stretch at 160-340 (ADVGLLGFPS…LTFALAKMVR (181 aa)) folds into the OBG-type G domain. GTP-binding positions include 166-173 (GFPSAGKS), 191-195 (FTTLV), 212-215 (DVPG), 292-295 (NKTD), and 321-323 (SAV). Residues Ser-173 and Thr-193 each contribute to the Mg(2+) site. Positions 358–438 (PVKVKDSSFT…IGDVSFEWEP (81 aa)) constitute an OCT domain.

The protein belongs to the TRAFAC class OBG-HflX-like GTPase superfamily. OBG GTPase family. As to quaternary structure, monomer. Mg(2+) is required as a cofactor.

The protein resides in the cytoplasm. Functionally, an essential GTPase which binds GTP, GDP and possibly (p)ppGpp with moderate affinity, with high nucleotide exchange rates and a fairly low GTP hydrolysis rate. Plays a role in control of the cell cycle, stress response, ribosome biogenesis and in those bacteria that undergo differentiation, in morphogenesis control. This Rhodococcus erythropolis (strain PR4 / NBRC 100887) protein is GTPase Obg.